Reading from the N-terminus, the 90-residue chain is Probable small nuclear ribonucleoprotein F (90 aa).

The region spanning 7–80 is the Sm domain; sequence NPRPFLQDLV…VLYIKKADEA (74 aa).

It belongs to the snRNP Sm proteins family. SmF/LSm6 subfamily.

Its subcellular location is the nucleus. The protein resides in the cytoplasm. Functionally, plays a role in pre-mRNA splicing as a core component of the spliceosomal U1, U2, U4 and U5 small nuclear ribonucleoproteins (snRNPs), the building blocks of the spliceosome. The polypeptide is Probable small nuclear ribonucleoprotein F (Neurospora crassa (strain ATCC 24698 / 74-OR23-1A / CBS 708.71 / DSM 1257 / FGSC 987)).